Here is a 515-residue protein sequence, read N- to C-terminus: MPTVVVMDVSLSMTRPVSVEGSEEYQRKHLAAHGLTMLFEHMATNYKLEFTALVVFSSLWELMVPFTRDYNTLQEALSNMDDYDKTCLESALVGVCNIVQQEWGGAIPCQVVLVTDGCLGIGRGSLRHSLATQNQRSESSRFPLPFPFPSKLYVMCMANLEELQSTDSLECLERLIDLNNGEGQIFTIDGPLCLKNVQSMFGKLIDLAYTPFHAALKCGHLTADVQVFPRPEPFVIDEEIDPIPKVINTDLEIVGFIDIADISSPPVLSRHLVLPIALNKEGDEVGAGITDDNEDENSANQIAGKIPNFCVLLHGSLKVEGMVALVQLGPEWHGMLYSQADSKKKSNLMMSLFEPGPEPLPWLGKMAQLGPISDAKENPYGEDDNKSPFPLQPKNKRSYAQNVTVWIKPSGLQTDVQKILRNARKLPEKTQTFYKELNRLRKAALAFGFLDLLKGVADMLERECTLLPDTAHPDAAFQLTHAAQQLKLASTEYAVYDLNITPLHTDFSGSSTERM.

In terms of domain architecture, VWFA spans 2 to 204 (PTVVVMDVSL…KNVQSMFGKL (203 aa)). The Mg(2+) site is built by Ser-10, Ser-12, and Thr-86. Lys-418 is modified (N6-acetyllysine).

It belongs to the Integrator subunit 14 family. As to quaternary structure, component of the Integrator complex, composed of core subunits INTS1, INTS2, INTS3, INTS4, INTS5, INTS6, INTS7, INTS8, INTS9/RC74, INTS10, INTS11/CPSF3L, INTS12, INTS13, INTS14 and INTS15. The core complex associates with protein phosphatase 2A subunits PPP2CA and PPP2R1A, to form the Integrator-PP2A (INTAC) complex. INTS14 is part of the tail subcomplex, composed of INTS10, INTS13, INTS14 and INTS15.

Its subcellular location is the nucleus. Component of the integrator complex, a multiprotein complex that terminates RNA polymerase II (Pol II) transcription in the promoter-proximal region of genes. The integrator complex provides a quality checkpoint during transcription elongation by driving premature transcription termination of transcripts that are unfavorably configured for transcriptional elongation: the complex terminates transcription by (1) catalyzing dephosphorylation of the C-terminal domain (CTD) of Pol II subunit POLR2A/RPB1 and SUPT5H/SPT5, (2) degrading the exiting nascent RNA transcript via endonuclease activity and (3) promoting the release of Pol II from bound DNA. The integrator complex is also involved in terminating the synthesis of non-coding Pol II transcripts, such as enhancer RNAs (eRNAs), small nuclear RNAs (snRNAs), telomerase RNAs and long non-coding RNAs (lncRNAs). Within the integrator complex, INTS14 is part of the integrator tail module that acts as a platform for the recruitment of transcription factors at promoters. The protein is Integrator complex subunit 14 of Rattus norvegicus (Rat).